Consider the following 132-residue polypeptide: Small ribosomal subunit protein uS8 (132 aa).

Belongs to the universal ribosomal protein uS8 family. Part of the 30S ribosomal subunit. Contacts proteins S5 and S12.

One of the primary rRNA binding proteins, it binds directly to 16S rRNA central domain where it helps coordinate assembly of the platform of the 30S subunit. The polypeptide is Small ribosomal subunit protein uS8 (Xanthomonas oryzae pv. oryzae (strain MAFF 311018)).